We begin with the raw amino-acid sequence, 343 residues long: tRNA N6-adenosine threonylcarbamoyltransferase (343 aa).

Fe cation is bound by residues His111 and His115. Residues 135–139 (VLSGG), Asp168, Gly181, and Asn280 contribute to the substrate site. Position 306 (Asp306) interacts with Fe cation.

This sequence belongs to the KAE1 / TsaD family. It depends on Fe(2+) as a cofactor.

Its subcellular location is the cytoplasm. The enzyme catalyses L-threonylcarbamoyladenylate + adenosine(37) in tRNA = N(6)-L-threonylcarbamoyladenosine(37) in tRNA + AMP + H(+). Its function is as follows. Required for the formation of a threonylcarbamoyl group on adenosine at position 37 (t(6)A37) in tRNAs that read codons beginning with adenine. Is involved in the transfer of the threonylcarbamoyl moiety of threonylcarbamoyl-AMP (TC-AMP) to the N6 group of A37, together with TsaE and TsaB. TsaD likely plays a direct catalytic role in this reaction. The sequence is that of tRNA N6-adenosine threonylcarbamoyltransferase from Protochlamydia amoebophila (strain UWE25).